A 417-amino-acid polypeptide reads, in one-letter code: CinA-like protein (417 aa).

Belongs to the CinA family.

This Gloeothece citriformis (strain PCC 7424) (Cyanothece sp. (strain PCC 7424)) protein is CinA-like protein.